The sequence spans 428 residues: MGCASSKHRKRCLHCRRGYSPPVDVQRSHSVHHASQNSEDSCHMVALSSSSLGSLKLCDSSFGHNHKHLADFSEKLVSGESVKTGNGFGPNVVREKSDKEKSNLELQAKLMEAKVWSSMMNEKIPKIVPKTPIVTPPGEPETINTWEMMDGLEDVLSPLRSPNHVKSFSFDVGPNGGKSNGSVKPVWLQMEEEEEGFEDFDPEIISSFRKSLQELPSDHPFHISNHDFELKPRFNFSDEEKEEEEQSVGKERVILYFTSLRGIRKTYEESCDVRVILKSLGIRVDERDVSMHSGFKDELKELLGEKFNKGVGITLPRVFLGRKYIGGAEEIRKLNEDGKLEKLLGGCERVEENQNGNGLECEACGDVRFVPCETCSGSCKVYYEYEDDDDDDDEGDDDESVKEEREYGFQTCPDCNENGLIRCPVCCD.

Residues 241-351 enclose the Glutaredoxin domain; that stretch reads KEEEEQSVGK…KLLGGCERVE (111 aa). A compositionally biased stretch (acidic residues) spans 386 to 401; it reads EDDDDDDDEGDDDESV. Positions 386–405 are disordered; it reads EDDDDDDDEGDDDESVKEER.

This is an uncharacterized protein from Arabidopsis thaliana (Mouse-ear cress).